The primary structure comprises 708 residues: Probable inactive lysine-specific demethylase JMJ19 (708 aa).

The tract at residues 35 to 59 is disordered; the sequence is VPRDKESPRSVSRQEQTTGFGTDDK. The segment covering 43–54 has biased composition (polar residues); sequence RSVSRQEQTTGF. The JmjN domain occupies 108–149; the sequence is APVFNPTEEEFRDTLSYISSLRDRAEPYGICCVVPPPSWKPP. Residues 293–454 form the JmjC domain; the sequence is SSGWNLNSTA…HGDIAVQVNQ (162 aa). Residues C544, C547, C558, C560, C567, H570, C575, and C577 each contribute to the Zn(2+) site. The RING-type; degenerate zinc finger occupies 544-581; that stretch reads CCVCLGDLYLSAVNCSCSANRYSCLNHMRKLCACPCDR. The short motif at 646-653 is the Nuclear localization signal element; sequence TRKDVAAG. Residues 678–694 are compositionally biased toward basic and acidic residues; that stretch reads AKETLESCSKKSNRPCD. Residues 678-708 form a disordered region; the sequence is AKETLESCSKKSNRPCDNDSSEANAPKKQKQ.

The protein belongs to the JARID1 histone demethylase family. Expressed in inflorescences, roots, siliques, leaves and stems.

It is found in the nucleus. This is Probable inactive lysine-specific demethylase JMJ19 from Arabidopsis thaliana (Mouse-ear cress).